The following is a 452-amino-acid chain: Enolase (452 aa).

Gln167 is a (2R)-2-phosphoglycerate binding site. Residue Glu209 is the Proton donor of the active site. Mg(2+)-binding residues include Asp250, Glu310, and Asp337. Lys362, Arg391, Ser392, and Lys413 together coordinate (2R)-2-phosphoglycerate. The active-site Proton acceptor is the Lys362.

The protein belongs to the enolase family. Mg(2+) serves as cofactor.

It is found in the cytoplasm. It localises to the secreted. The protein resides in the cell surface. It carries out the reaction (2R)-2-phosphoglycerate = phosphoenolpyruvate + H2O. It participates in carbohydrate degradation; glycolysis; pyruvate from D-glyceraldehyde 3-phosphate: step 4/5. Its function is as follows. Catalyzes the reversible conversion of 2-phosphoglycerate (2-PG) into phosphoenolpyruvate (PEP). It is essential for the degradation of carbohydrates via glycolysis. The polypeptide is Enolase (Mycoplasmopsis synoviae (strain 53) (Mycoplasma synoviae)).